The sequence spans 132 residues: Small ribosomal subunit protein uS11 (132 aa).

The tract at residues 113-132 (VTPIPHDGTRAPGGKRGRRV) is disordered.

This sequence belongs to the universal ribosomal protein uS11 family. As to quaternary structure, part of the 30S ribosomal subunit.

Located on the platform of the 30S subunit. In Methanocella arvoryzae (strain DSM 22066 / NBRC 105507 / MRE50), this protein is Small ribosomal subunit protein uS11.